Here is a 264-residue protein sequence, read N- to C-terminus: uncharacterized protein (264 aa).

The N-terminal stretch at methionine 1–alanine 22 is a signal peptide. Residues leucine 227–tyrosine 247 form a helical membrane-spanning segment.

The protein localises to the membrane. This is an uncharacterized protein from Bacillus subtilis (strain 168).